Reading from the N-terminus, the 350-residue chain is Transmembrane protein 185B (350 aa).

A run of 7 helical transmembrane segments spans residues 16–36, 41–61, 81–101, 111–131, 168–188, 211–231, and 240–260; these read LIYA…DGVI, WAVF…ASVG, FKAM…EVLV, FWLL…AACV, WLVV…VVLY, VTMA…EVLL, and MFSY…LMAT.

It belongs to the TMEM185 family.

Its subcellular location is the membrane. The protein is Transmembrane protein 185B (TMEM185B) of Bos taurus (Bovine).